We begin with the raw amino-acid sequence, 487 residues long: Cysteine--tRNA ligase (487 aa).

Position 27 (Cys27) interacts with Zn(2+). The 'HIGH' region signature appears at 29–39 (ATVQGLPHVGH). Residues 174–194 (IDDMQGAPDADPRGKKDPRDF) form a disordered region. Residues 183–194 (ADPRGKKDPRDF) show a composition bias toward basic and acidic residues. The Zn(2+) site is built by Cys225, His250, and Glu254. A 'KMSKS' region motif is present at residues 281–285 (KMSKS). Residue Lys284 coordinates ATP.

It belongs to the class-I aminoacyl-tRNA synthetase family. In terms of assembly, monomer. Zn(2+) is required as a cofactor.

Its subcellular location is the cytoplasm. It carries out the reaction tRNA(Cys) + L-cysteine + ATP = L-cysteinyl-tRNA(Cys) + AMP + diphosphate. This Arthrobacter sp. (strain FB24) protein is Cysteine--tRNA ligase.